A 480-amino-acid polypeptide reads, in one-letter code: 3,6-anhydro-alpha-L-galactose dehydrogenase (480 aa).

NADP(+)-binding positions include 149 to 150 (WN), 173 to 176 (KPTS), and 226 to 227 (GS). Residue Glu-248 is the Proton acceptor of the active site. An NADP(+)-binding site is contributed by Leu-249. The active-site Nucleophile is Cys-282. Glu-383 provides a ligand contact to NADP(+).

It belongs to the aldehyde dehydrogenase family.

It catalyses the reaction 3,6-anhydro-alpha-L-galactopyranose + NADP(+) + H2O = 3,6-anhydro-L-galactonate + NADPH + 2 H(+). It carries out the reaction 3,6-anhydro-alpha-L-galactopyranose + NAD(+) + H2O = 3,6-anhydro-L-galactonate + NADH + 2 H(+). Its function is as follows. Involved in the degradation of 3,6-anhydro-L-galactose, which is the major monomeric sugar of red macroalgae. Catalyzes the oxidation of 3,6-anhydro-L-galactose (AHG) to form 3,6-anhydrogalactonate (AHGA). The polypeptide is 3,6-anhydro-alpha-L-galactose dehydrogenase (Vibrio sp. (strain EJY3)).